Reading from the N-terminus, the 116-residue chain is MNLILLLVIGFLVFIGTYMILSLNLIRIVIGISIYTHAGNLIIMSMGHYSNKMTEPLIHGSNTNYVDPLLQAIVLTAIVIGFAMTAFLLVLVYRTYRVTKEANIDVLRGEEDENEQ.

3 helical membrane passes run 3–23, 28–48, and 72–92; these read LILL…ILSL, IVIG…SMGH, and AIVL…LVLV.

It belongs to the CPA3 antiporters (TC 2.A.63) subunit C family. In terms of assembly, may form a heterooligomeric complex that consists of seven subunits: mnhA2, mnhB2, mnhC2, mnhD2, mnhE2, mnhF2 and mnhG2.

It is found in the cell membrane. The protein is Putative antiporter subunit mnhC2 (mnhC2) of Staphylococcus haemolyticus (strain JCSC1435).